We begin with the raw amino-acid sequence, 910 residues long: Leucine--tRNA ligase (910 aa).

Positions 50–60 (PYTNGSLHVGH) match the 'HIGH' region motif. The short motif at 611–615 (KISKS) is the 'KMSKS' region element. Residue lysine 614 participates in ATP binding.

Belongs to the class-I aminoacyl-tRNA synthetase family.

Its subcellular location is the cytoplasm. The catalysed reaction is tRNA(Leu) + L-leucine + ATP = L-leucyl-tRNA(Leu) + AMP + diphosphate. The polypeptide is Leucine--tRNA ligase (Thermoplasma volcanium (strain ATCC 51530 / DSM 4299 / JCM 9571 / NBRC 15438 / GSS1)).